We begin with the raw amino-acid sequence, 392 residues long: Major outer membrane protein P.IA (392 aa).

A signal peptide spans Met-1–Ala-19.

This sequence belongs to the Gram-negative porin family. As to quaternary structure, homotrimer.

It is found in the cell outer membrane. Functionally, serves as a slightly cation selective porin. Major antigen on the gonococcal cell surface and it may have pathogenic properties in addition to its porin activity. The polypeptide is Major outer membrane protein P.IA (porA) (Neisseria meningitidis serogroup B / serotype 15 (strain H44/76)).